The following is a 292-amino-acid chain: Mitochondrial ornithine transporter 1 (292 aa).

Solcar repeat units follow at residues 11-97 (EGAI…CSKF), 105-196 (SPLG…VKKS), and 211-292 (SKIW…LSAL). 6 consecutive transmembrane segments (helical) span residues 14–34 (ILDI…EFPF), 69–89 (FFQG…TLFV), 104–124 (VSPL…ASLV), 171–187 (GQSG…VAWF), 213–233 (IWEL…SIFP), and 267–287 (GLGI…YIFE).

It belongs to the mitochondrial carrier (TC 2.A.29) family.

Its subcellular location is the mitochondrion inner membrane. Its function is as follows. Required for arginine biosynthesis. Transports ornithine synthesized from glutamate in the mitochondrial matrix to the cytosol, where it is converted to arginine. The sequence is that of Mitochondrial ornithine transporter 1 (ORT1) from Saccharomyces cerevisiae (strain ATCC 204508 / S288c) (Baker's yeast).